Consider the following 324-residue polypeptide: 3-hydroxyisobutyrate dehydrogenase, mitochondrial (324 aa).

The transit peptide at 1-25 (MSLRVMSPAMLNAWSQTLVRAMSTQ) directs the protein to the mitochondrion. NAD(+)-binding positions include 29–58 (KNIG…HVFD), 92–93 (LP), and threonine 121. Lysine 196 is a catalytic residue. Lysine 271 is a binding site for NAD(+).

Belongs to the HIBADH-related family. 3-hydroxyisobutyrate dehydrogenase subfamily.

The protein localises to the mitochondrion. The catalysed reaction is 3-hydroxy-2-methylpropanoate + NAD(+) = 2-methyl-3-oxopropanoate + NADH + H(+). It participates in amino-acid degradation; L-valine degradation. The sequence is that of 3-hydroxyisobutyrate dehydrogenase, mitochondrial from Drosophila melanogaster (Fruit fly).